Here is a 144-residue protein sequence, read N- to C-terminus: Transcription antitermination protein NusB (144 aa).

The protein belongs to the NusB family.

In terms of biological role, involved in transcription antitermination. Required for transcription of ribosomal RNA (rRNA) genes. Binds specifically to the boxA antiterminator sequence of the ribosomal RNA (rrn) operons. The protein is Transcription antitermination protein NusB of Dictyoglomus thermophilum (strain ATCC 35947 / DSM 3960 / H-6-12).